Here is a 368-residue protein sequence, read N- to C-terminus: WD repeat-containing protein RUP2 (368 aa).

7 WD repeats span residues 38-77 (SASD…RNNA), 97-138 (CTPA…PVFE), 141-184 (EHGG…EESV), 192-232 (ICRS…DPAL), 236-276 (GHTK…RTYE), 279-318 (VNNR…PVWV), and 330-368 (SDKR…KRKP).

As to quaternary structure, interacts with UVR8.

The protein localises to the nucleus. It localises to the cytoplasm. It is found in the cytosol. Functionally, functions in association with RUP1 as repressor of UV-B-induced photomorphogenesis mediated by UVR8 and HY5. Plays a crucial negative feedback regulatory role downstream of UVR8-COP1 to inhibit UVR8 function, balance UV-B-specific responses and ensure normal plant growth. Is involved in the regulation of photoperiodic flowering and vegetative development. May act as negative regulator of photoperiodic flowering by suppressing flowering through the action of CONSTANS (CO) and FLOWERING LOCUS T (FT). The polypeptide is WD repeat-containing protein RUP2 (RUP2) (Arabidopsis thaliana (Mouse-ear cress)).